A 461-amino-acid chain; its full sequence is Mycosin-3 (461 aa).

An N-terminal signal peptide occupies residues 1–25 (MIRAAFACLAATVVVAGWWTPPAWA). The region spanning 64–397 (DPGVPTPSQT…AGNLDAVAAL (334 aa)) is the Peptidase S8 domain. Catalysis depends on charge relay system residues Asp-95, His-126, and Ser-342. The helical transmembrane segment at 432-452 (AFAGAAALSVLVGLTAATVAI) threads the bilayer.

Belongs to the peptidase S8 family.

The protein localises to the cell membrane. This is Mycosin-3 from Mycobacterium tuberculosis (strain ATCC 25618 / H37Rv).